The following is a 269-amino-acid chain: Tryptophan synthase alpha chain (269 aa).

Active-site proton acceptor residues include Glu-49 and Asp-60.

The protein belongs to the TrpA family. Tetramer of two alpha and two beta chains.

The enzyme catalyses (1S,2R)-1-C-(indol-3-yl)glycerol 3-phosphate + L-serine = D-glyceraldehyde 3-phosphate + L-tryptophan + H2O. The protein operates within amino-acid biosynthesis; L-tryptophan biosynthesis; L-tryptophan from chorismate: step 5/5. In terms of biological role, the alpha subunit is responsible for the aldol cleavage of indoleglycerol phosphate to indole and glyceraldehyde 3-phosphate. The protein is Tryptophan synthase alpha chain of Pseudomonas putida (strain ATCC 700007 / DSM 6899 / JCM 31910 / BCRC 17059 / LMG 24140 / F1).